A 299-amino-acid chain; its full sequence is Bifunctional protein FolD 1 (299 aa).

Residues 168–170 (GRS), Ser-193, and Ile-234 each bind NADP(+).

Belongs to the tetrahydrofolate dehydrogenase/cyclohydrolase family. In terms of assembly, homodimer.

It carries out the reaction (6R)-5,10-methylene-5,6,7,8-tetrahydrofolate + NADP(+) = (6R)-5,10-methenyltetrahydrofolate + NADPH. The catalysed reaction is (6R)-5,10-methenyltetrahydrofolate + H2O = (6R)-10-formyltetrahydrofolate + H(+). Its pathway is one-carbon metabolism; tetrahydrofolate interconversion. Catalyzes the oxidation of 5,10-methylenetetrahydrofolate to 5,10-methenyltetrahydrofolate and then the hydrolysis of 5,10-methenyltetrahydrofolate to 10-formyltetrahydrofolate. This is Bifunctional protein FolD 1 from Rhizobium etli (strain ATCC 51251 / DSM 11541 / JCM 21823 / NBRC 15573 / CFN 42).